Consider the following 294-residue polypeptide: UDP-3-O-acyl-N-acetylglucosamine deacetylase (294 aa).

Residues histidine 75, histidine 232, and aspartate 236 each coordinate Zn(2+). The active-site Proton donor is the histidine 259.

The protein belongs to the LpxC family. Zn(2+) serves as cofactor.

It carries out the reaction a UDP-3-O-[(3R)-3-hydroxyacyl]-N-acetyl-alpha-D-glucosamine + H2O = a UDP-3-O-[(3R)-3-hydroxyacyl]-alpha-D-glucosamine + acetate. It participates in glycolipid biosynthesis; lipid IV(A) biosynthesis; lipid IV(A) from (3R)-3-hydroxytetradecanoyl-[acyl-carrier-protein] and UDP-N-acetyl-alpha-D-glucosamine: step 2/6. Its function is as follows. Catalyzes the hydrolysis of UDP-3-O-myristoyl-N-acetylglucosamine to form UDP-3-O-myristoylglucosamine and acetate, the committed step in lipid A biosynthesis. In Campylobacter fetus subsp. fetus (strain 82-40), this protein is UDP-3-O-acyl-N-acetylglucosamine deacetylase.